The following is a 424-amino-acid chain: Glutamate-1-semialdehyde 2,1-aminomutase (424 aa).

Lysine 266 bears the N6-(pyridoxal phosphate)lysine mark.

Belongs to the class-III pyridoxal-phosphate-dependent aminotransferase family. HemL subfamily. As to quaternary structure, homodimer. The cofactor is pyridoxal 5'-phosphate.

Its subcellular location is the cytoplasm. The enzyme catalyses (S)-4-amino-5-oxopentanoate = 5-aminolevulinate. It participates in porphyrin-containing compound metabolism; protoporphyrin-IX biosynthesis; 5-aminolevulinate from L-glutamyl-tRNA(Glu): step 2/2. The chain is Glutamate-1-semialdehyde 2,1-aminomutase from Thermus thermophilus (strain ATCC 27634 / DSM 579 / HB8).